A 1056-amino-acid chain; its full sequence is PAX-interacting protein 1 (1056 aa).

2 consecutive BRCT domains span residues 8–93 and 94–183; these read VPEE…GFSP and ESCQ…FYHP. Positions 94 to 183 are interaction with PAGR1; that stretch reads ESCQIFFGLT…RRKDEAFYHP (90 aa). Positions 188–205 are enriched in acidic residues; it reads YEEEEEEEEEGDNEEQDS. 3 disordered regions span residues 188–276, 393–412, and 419–486; these read YEEE…QRRL, THVL…HPAL, and MQLQ…FQQQ. Positions 214 to 223 are enriched in low complexity; the sequence is SSVASSAVAS. Phosphoserine occurs at positions 223 and 230. Composition is skewed to low complexity over residues 396 to 412, 419 to 435, and 445 to 486; these read LQQH…HPAL, MQLQ…QQQP, and QFPQ…FQQQ. Residues 577-1056 are interaction with TP53BP1; that stretch reads QLFGHDPAVE…TLDYESYKFN (480 aa). BRCT domains follow at residues 588–681, 688–776, 853–934, and 955–989; these read PEES…RALH, PGGK…VQYS, TPLV…NYIL, and HVSP…GGKV. The short motif at 655–672 is the Nuclear localization signal element; it reads RKRCVTAHWLNTVLKKKK.

Interacts with the C-terminal transactivation domain of PAX2. Forms a constitutive complex with PAGR1 independently of the MLL2/MLL3 complex. Interacts with TP53BP1 (when phosphorylated at the N-terminus by ATM). Interacts with HLTF. Component of the KMT2 family MLL2/MLL3 complex (also named ASCOM complex), at least composed of the HMTs KMT2D and/or KMT2C, the common subunits ASH2L, RBBP5, WDR5 and DPY30, and the complex type-specific subunits PAXIP1/PTIP, PAGR1, NCOA6 and KDM6A; required for the association of PAGR1 with the MLL2/MLL3 complex. Interacts with NUPR1; this interaction prevents PAXIP1 inhibition of PAX2 transcription factor activity. As to expression, expression detected in all tissues examined, including brain stem, cerebellum, cortex, heart, spleen, kidney, liver, thymus and lung.

It localises to the nucleus matrix. It is found in the chromosome. In terms of biological role, involved in DNA damage response and in transcriptional regulation through histone methyltransferase (HMT) complexes such as the MLL2/MLL3 complex. Plays a role in early development. In DNA damage response is required for cell survival after ionizing radiation. In vitro shown to be involved in the homologous recombination mechanism for the repair of double-strand breaks (DSBs). Its localization to DNA damage foci requires Rnf8 and Ube2n. Recruits Tp53bp1 to DNA damage foci and, at least in particular repair processes, effective DNA damage response appears to require the association with Tp53bp1 phosphorylated by Atm. Together with Tp53bp1 regulates Atm association. Proposed to recruit Pagr1 to sites of DNA damage and the Pagr1:Paxip1 complex is required for cell survival in response to DNA damage independently of the MLL2/MLL3 complex. However, this function has been questioned. Promotes ubiquitination of PCNA following UV irradiation and may regulate recruitment of polymerase eta and Rad51 to chromatin after DNA damage. Proposed to be involved in transcriptional regulation by linking MLL-containing histone methyltransferase (HMT) complexes to gene promoters by interacting with promoter-bound transcription factors such as Pax2. Associates with gene promoters that are known to be regulated by Kmt2d/Mll2. During immunoglobulin class switching in activated B-cells is involved in trimethylation of histone H3 at 'Lys-4' and in transcription initiation of downstream switch regions at the immunoglobulin heavy-chain (Igh) locus; this function appears to involve the recruitment of MLL-containing HMT complexes. Conflictingly, its function in transcriptional regulation during immunoglobulin class switching is reported to be independent of the MLL2/MLL3 complex. This Mus musculus (Mouse) protein is PAX-interacting protein 1 (Paxip1).